Reading from the N-terminus, the 257-residue chain is Thiazole synthase (257 aa).

Residue Lys95 is the Schiff-base intermediate with DXP of the active site. 1-deoxy-D-xylulose 5-phosphate contacts are provided by residues Gly156, 182-183 (AG), and 204-205 (NT).

Belongs to the ThiG family. Homotetramer. Forms heterodimers with either ThiH or ThiS.

The protein resides in the cytoplasm. The catalysed reaction is [ThiS sulfur-carrier protein]-C-terminal-Gly-aminoethanethioate + 2-iminoacetate + 1-deoxy-D-xylulose 5-phosphate = [ThiS sulfur-carrier protein]-C-terminal Gly-Gly + 2-[(2R,5Z)-2-carboxy-4-methylthiazol-5(2H)-ylidene]ethyl phosphate + 2 H2O + H(+). Its pathway is cofactor biosynthesis; thiamine diphosphate biosynthesis. Catalyzes the rearrangement of 1-deoxy-D-xylulose 5-phosphate (DXP) to produce the thiazole phosphate moiety of thiamine. Sulfur is provided by the thiocarboxylate moiety of the carrier protein ThiS. In vitro, sulfur can be provided by H(2)S. This is Thiazole synthase from Fusobacterium nucleatum subsp. nucleatum (strain ATCC 25586 / DSM 15643 / BCRC 10681 / CIP 101130 / JCM 8532 / KCTC 2640 / LMG 13131 / VPI 4355).